The chain runs to 355 residues: 3-dehydroquinate synthase (355 aa).

NAD(+) contacts are provided by residues 71 to 76, 105 to 109, 129 to 130, Lys142, and Lys151; these read EGEERK, GVVGD, and TS. Zn(2+) contacts are provided by Glu184, His246, and His263.

This sequence belongs to the sugar phosphate cyclases superfamily. Dehydroquinate synthase family. The cofactor is Co(2+). Zn(2+) is required as a cofactor. Requires NAD(+) as cofactor.

Its subcellular location is the cytoplasm. It carries out the reaction 7-phospho-2-dehydro-3-deoxy-D-arabino-heptonate = 3-dehydroquinate + phosphate. Its pathway is metabolic intermediate biosynthesis; chorismate biosynthesis; chorismate from D-erythrose 4-phosphate and phosphoenolpyruvate: step 2/7. Functionally, catalyzes the conversion of 3-deoxy-D-arabino-heptulosonate 7-phosphate (DAHP) to dehydroquinate (DHQ). This Streptococcus pneumoniae serotype 19F (strain G54) protein is 3-dehydroquinate synthase.